Here is a 192-residue protein sequence, read N- to C-terminus: Bifunctional protein PyrR (192 aa).

A PRPP-binding motif is present at residues 107 to 119 (VVLVDDVLFSGRT).

It belongs to the purine/pyrimidine phosphoribosyltransferase family. PyrR subfamily.

It catalyses the reaction UMP + diphosphate = 5-phospho-alpha-D-ribose 1-diphosphate + uracil. Functionally, regulates the transcription of the pyrimidine nucleotide (pyr) operon in response to exogenous pyrimidines. Its function is as follows. Also displays a weak uracil phosphoribosyltransferase activity which is not physiologically significant. This chain is Bifunctional protein PyrR, found in Corynebacterium efficiens (strain DSM 44549 / YS-314 / AJ 12310 / JCM 11189 / NBRC 100395).